A 152-amino-acid chain; its full sequence is Ribonuclease HI (152 aa).

One can recognise an RNase H type-1 domain in the interval 1 to 142; sequence MDSKVVIYTD…ADKLAVQGRE (142 aa). Mg(2+)-binding residues include D10, E48, D70, and D134.

It belongs to the RNase H family. In terms of assembly, monomer. The cofactor is Mg(2+).

The protein localises to the cytoplasm. The catalysed reaction is Endonucleolytic cleavage to 5'-phosphomonoester.. Functionally, endonuclease that specifically degrades the RNA of RNA-DNA hybrids. The chain is Ribonuclease HI (rnhA) from Rickettsia prowazekii (strain Madrid E).